The chain runs to 217 residues: Vesicle-associated membrane protein 723 (217 aa).

At 1 to 192 (MAQQSLFYSF…KWFQNMKIKL (192 aa)) the chain is on the cytoplasmic side. Residues 10–114 (FIARGTVILV…SLNKEFGSNL (105 aa)) enclose the Longin domain. The region spanning 130–186 (NLAKAKAQVSEVKSLMMENIEKVLARGVICEMLGSSESQPQAFYIKRTQMKRKKWFQ) is the v-SNARE coiled-coil homology domain. The helical; Anchor for type IV membrane protein transmembrane segment at 193–213 (IVLAIIIALILIIILSVCGGF) threads the bilayer. At 214–217 (NCGK) the chain is on the vesicular side.

The protein belongs to the synaptobrevin family. Highly expressed in stems and roots. Detected in flowers and leaves.

Its subcellular location is the endoplasmic reticulum membrane. Involved in the targeting and/or fusion of transport vesicles to their target membrane. This Arabidopsis thaliana (Mouse-ear cress) protein is Vesicle-associated membrane protein 723.